A 268-amino-acid chain; its full sequence is Tryptophan synthase alpha chain (268 aa).

Catalysis depends on proton acceptor residues Glu-49 and Asp-60.

The protein belongs to the TrpA family. As to quaternary structure, tetramer of two alpha and two beta chains.

The catalysed reaction is (1S,2R)-1-C-(indol-3-yl)glycerol 3-phosphate + L-serine = D-glyceraldehyde 3-phosphate + L-tryptophan + H2O. Its pathway is amino-acid biosynthesis; L-tryptophan biosynthesis; L-tryptophan from chorismate: step 5/5. The alpha subunit is responsible for the aldol cleavage of indoleglycerol phosphate to indole and glyceraldehyde 3-phosphate. The sequence is that of Tryptophan synthase alpha chain from Aliivibrio fischeri (strain ATCC 700601 / ES114) (Vibrio fischeri).